Consider the following 204-residue polypeptide: Large ribosomal subunit protein eL15 (204 aa).

This sequence belongs to the eukaryotic ribosomal protein eL15 family. Component of the large ribosomal subunit.

It is found in the cytoplasm. Functionally, component of the large ribosomal subunit. The ribosome is a large ribonucleoprotein complex responsible for the synthesis of proteins in the cell. This Mylopharyngodon piceus (Black carp) protein is Large ribosomal subunit protein eL15 (rpl15).